A 767-amino-acid chain; its full sequence is Photosystem I P700 chlorophyll a apoprotein A1 (767 aa).

The tract at residues 1 to 22 (MTISPPESGEKNKKVLEDPVKA) is disordered. The segment covering 8–22 (SGEKNKKVLEDPVKA) has biased composition (basic and acidic residues). Helical transmembrane passes span 76–99 (IFSAHFGHLAVIFIWMSAAFFHGA), 162–185 (LMALAIGAVVMAALMLHAGIFHYH), 201–225 (LNHHIAGLVGLGSLAWAGHCIHIGA), 309–327 (VSHHHLAFGVIAIIGGHMY), 368–391 (RHAQLSVNLAMLGSISILVSHHMY), 407–433 (LGLFTHHMWIGGLFIVGAGAHAGIAMV), 455–477 (ALISHLNWVCMWLGFHSFGLYIH), and 558–576 (LMIHHIHAFQIHVTVLILL). [4Fe-4S] cluster-binding residues include Cys-600 and Cys-609. Transmembrane regions (helical) follow at residues 616–637 (HVFLALFWMYNCLSIVIFHFSW) and 681–703 (ISMYGLMFLGAHFIWAFSLMFLF). His-692 contributes to the divinylchlorophyll a' binding site. Met-700 and Tyr-708 together coordinate divinyl chlorophyll a. Trp-709 is a phylloquinone binding site. Residues 741–761 (AVGVTHFLVGGIATTWAFFHA) traverse the membrane as a helical segment.

Belongs to the PsaA/PsaB family. As to quaternary structure, the PsaA/B heterodimer binds the P700 divinyl chlorophyll special pair and subsequent electron acceptors. PSI consists of a core antenna complex that captures photons, and an electron transfer chain that converts photonic excitation into a charge separation. The cyanobacterial PSI reaction center is composed of one copy each of PsaA,B,C,D,E,F,I,J,K,L,M and X, and forms trimeric complexes. The cofactor is PSI electron transfer chain: 5 divinyl chlorophyll a, 1 divinyl chlorophyll a', 2 phylloquinones and 3 4Fe-4S clusters. PSI core antenna: 90 divinyl chlorophyll a, 22 carotenoids, 3 phospholipids and 1 galactolipid. P700 is a divinyl chlorophyll a/divinyl chlorophyll a' dimer, A0 is one or more divinyl chlorophyll a, A1 is one or both phylloquinones and FX is a shared 4Fe-4S iron-sulfur center..

It localises to the cellular thylakoid membrane. It carries out the reaction reduced [plastocyanin] + hnu + oxidized [2Fe-2S]-[ferredoxin] = oxidized [plastocyanin] + reduced [2Fe-2S]-[ferredoxin]. PsaA and PsaB bind P700, the primary electron donor of photosystem I (PSI), as well as the electron acceptors A0, A1 and FX. PSI is a plastocyanin/cytochrome c6-ferredoxin oxidoreductase, converting photonic excitation into a charge separation, which transfers an electron from the donor P700 chlorophyll pair to the spectroscopically characterized acceptors A0, A1, FX, FA and FB in turn. Oxidized P700 is reduced on the lumenal side of the thylakoid membrane by plastocyanin or cytochrome c6. The chain is Photosystem I P700 chlorophyll a apoprotein A1 from Prochlorococcus marinus (strain AS9601).